The chain runs to 103 residues: NADH-quinone oxidoreductase subunit K (103 aa).

3 helical membrane passes run 6–26, 32–52, and 63–83; these read LSHF…GIFL, LVLL…FVAF, and IFVF…LAIL.

The protein belongs to the complex I subunit 4L family. As to quaternary structure, NDH-1 is composed of 14 different subunits. Subunits NuoA, H, J, K, L, M, N constitute the membrane sector of the complex.

It localises to the cell inner membrane. It carries out the reaction a quinone + NADH + 5 H(+)(in) = a quinol + NAD(+) + 4 H(+)(out). NDH-1 shuttles electrons from NADH, via FMN and iron-sulfur (Fe-S) centers, to quinones in the respiratory chain. The immediate electron acceptor for the enzyme in this species is believed to be ubiquinone. Couples the redox reaction to proton translocation (for every two electrons transferred, four hydrogen ions are translocated across the cytoplasmic membrane), and thus conserves the redox energy in a proton gradient. The sequence is that of NADH-quinone oxidoreductase subunit K from Dechloromonas aromatica (strain RCB).